A 94-amino-acid chain; its full sequence is Large ribosomal subunit protein bL25 (94 aa).

This sequence belongs to the bacterial ribosomal protein bL25 family. Part of the 50S ribosomal subunit; part of the 5S rRNA/L5/L18/L25 subcomplex. Contacts the 5S rRNA. Binds to the 5S rRNA independently of L5 and L18.

Functionally, this is one of the proteins that binds to the 5S RNA in the ribosome where it forms part of the central protuberance. This Salmonella arizonae (strain ATCC BAA-731 / CDC346-86 / RSK2980) protein is Large ribosomal subunit protein bL25.